Here is a 228-residue protein sequence, read N- to C-terminus: Secreted LysM effector ECP6 (228 aa).

An N-terminal signal peptide occupies residues 1–18 (MQSMILFAAALMGAAVNG). Intrachain disulfides connect Cys-36–Cys-90, Cys-64–Cys-98, Cys-109–Cys-163, and Cys-168–Cys-220. One can recognise a LysM 1 domain in the interval 42–86 (IKYTVVKGDTLTSIAKKFKSGICNIVSVNKLANPNLIELGATLII). Chitin is bound by residues Thr-51, Thr-53, Asn-76, and Ile-78. 4 N-linked (GlcNAc...) asparagine glycosylation sites follow: Asn-89, Asn-95, Asn-127, and Asn-133. 2 LysM domains span residues 115 to 160 (GSYT…IITV) and 172 to 216 (GTYN…QIIL). Residues Gly-179, Leu-181, Val-183, Pro-205, Ser-206, and Leu-208 each contribute to the chitin site. N-linked (GlcNAc...) asparagine glycosylation is present at Asn-222.

Belongs to the secreted LysM effector family. As to quaternary structure, forms homodimers.

It is found in the secreted. In terms of biological role, secreted effector that enables the plant pathogenic fungus to manipulate host defenses for successful infection. Binds chitine, but not to any other glycan, including the N-linked glycan chitobiose. Outcompetes host immune receptor for chitin binding through intrachain LysM dimerization. During infection, sequesters chitin oligosaccharides that are released from the cell walls of invading hyphae to prevent elicitation of host immunity. The polypeptide is Secreted LysM effector ECP6 (Passalora fulva (Tomato leaf mold)).